The following is a 238-amino-acid chain: Ribitol-5-phosphate cytidylyltransferase (238 aa).

CTP-binding positions include 7-10 and 81-87; these read LAGG and GDDRNHT.

It belongs to the IspD/TarI cytidylyltransferase family. TarI subfamily.

The enzyme catalyses D-ribitol 5-phosphate + CTP + H(+) = CDP-L-ribitol + diphosphate. The protein operates within cell wall biogenesis; poly(ribitol phosphate) teichoic acid biosynthesis. In terms of biological role, catalyzes the transfer of the cytidylyl group of CTP to D-ribitol 5-phosphate. The chain is Ribitol-5-phosphate cytidylyltransferase from Staphylococcus epidermidis (strain ATCC 35984 / DSM 28319 / BCRC 17069 / CCUG 31568 / BM 3577 / RP62A).